The following is a 147-amino-acid chain: Small ribosomal subunit protein eS10B (147 aa).

The interval 90-147 (THKRQVRPAAPRAGRPEPRERSSAADAGYRRAEKKDDGAAPGGFAPSFRGGFGRPVAA) is disordered. Residues 103–127 (GRPEPRERSSAADAGYRRAEKKDDG) are compositionally biased toward basic and acidic residues.

This sequence belongs to the eukaryotic ribosomal protein eS10 family. In terms of assembly, component of the small ribosomal subunit (SSU). Mature yeast ribosomes consist of a small (40S) and a large (60S) subunit. The 40S small subunit contains 1 molecule of ribosomal RNA (18S rRNA) and at least 33 different proteins. The large 60S subunit contains 3 rRNA molecules (25S, 5.8S and 5S rRNA) and at least 46 different proteins. eS10 interacts with GCN1 (via middle region); this interaction is direct and promotes GCN2 kinase activity.

It is found in the cytoplasm. In terms of biological role, component of the ribosome, a large ribonucleoprotein complex responsible for the synthesis of proteins in the cell. The small ribosomal subunit (SSU) binds messenger RNAs (mRNAs) and translates the encoded message by selecting cognate aminoacyl-transfer RNA (tRNA) molecules. The large subunit (LSU) contains the ribosomal catalytic site termed the peptidyl transferase center (PTC), which catalyzes the formation of peptide bonds, thereby polymerizing the amino acids delivered by tRNAs into a polypeptide chain. The nascent polypeptides leave the ribosome through a tunnel in the LSU and interact with protein factors that function in enzymatic processing, targeting, and the membrane insertion of nascent chains at the exit of the ribosomal tunnel. eS10 plays a role as a positive regulator of the GCN2 kinase activity by stimulating GCN1-mediated GCN2 activation. The protein is Small ribosomal subunit protein eS10B (rps1002) of Schizosaccharomyces pombe (strain 972 / ATCC 24843) (Fission yeast).